We begin with the raw amino-acid sequence, 535 residues long: Zinc transporter ZIP5 (535 aa).

A signal peptide spans 1 to 19 (MGPPVHHLLTGLCVGVALG). Topologically, residues 20–210 (WVGGSVPNLG…PAPPGDVLSA (191 aa)) are extracellular. 2 N-linked (GlcNAc...) asparagine glycosylation sites follow: N49 and N158. The helical transmembrane segment at 211–231 (LLHSGLAVLFLSLPAPLSLLL) threads the bilayer. At 232 to 242 (LRLLGPRLLRP) the chain is on the cytoplasmic side. The chain crosses the membrane as a helical span at residues 243–263 (VLGFLGALAVGTLCGDALLHL). The Extracellular portion of the chain corresponds to 264–285 (LPHAQGGRHTGPSEQSEEDLGP). A helical membrane pass occupies residues 286-306 (GLSVLGGLFLLFMLENTLGLV). Residues 307–439 (RHRGLRPRCC…LLQEGLSFRK (133 aa)) are Cytoplasmic-facing. The interval 316–373 (CRNKRDLGEPNPDPEDGSGMVLRPLQAASEPEVQGQRENRQSSPSLAPPGHQGHSHEH) is disordered. S333 carries the post-translational modification Phosphoserine. Pros-methylhistidine is present on H371. A helical transmembrane segment spans residues 440-460 (LLLLSLVSGALGLGGAALGVG). Residues 461–465 (LSLGP) are Extracellular-facing. Residues 466-486 (VPLTPWVFGTTAGVFLYVALV) form a helical membrane-spanning segment. Over 487 to 503 (DMLPTLLRPPEPLPVFH) the chain is Cytoplasmic. Residues 504–524 (VLLQGLGLLLGGSLMFTIALL) form a helical membrane-spanning segment. Residues 525–535 (EEQLVPTVPDG) lie on the Extracellular side of the membrane.

Belongs to the ZIP transporter (TC 2.A.5) family. In terms of assembly, homodimer. Post-translationally, N-Glycosylated. In terms of processing, methylated at His-371 by METTL9. As to expression, expressed in all stages of eye development and primarily in the sclera and several layers of the retina, including the inner segment, outer plexiform layer and ganglion cell layer. Expressed in pancreas, kidney and the proximal and distal small intestine as well as in the embryonic visceral yolk sac. In the proximal intestine, expression is predominant in the crypts but diminishes toward the apical regions of the villi.

It localises to the basolateral cell membrane. It carries out the reaction Zn(2+)(in) = Zn(2+)(out). Uniporter that transports zinc(2+) into polarized cells of enterocytes, pancreatic acinar and endoderm cells across the basolateral membrane and participates, notably, in zinc excretion from the intestine by the uptake of zinc from the blood into the intestine. The transport mechanism is temperature- and concentration-dependent and saturable. In addition, is also a high affinity copper transporter in vitro. Also may regulate glucose-stimulated insulin secretion (GSIS) in islets primarily through the zinc-activated SIRT1-PPARGC1A axis. Could regulate the BMP/TGF-beta (bone morphogenetic protein/transforming growth factor-beta) signaling pathway and modulates extracellular matrix (ECM) proteins of the sclera. Plays a role in eye development. The sequence is that of Zinc transporter ZIP5 from Mus musculus (Mouse).